Consider the following 295-residue polypeptide: UTP--glucose-1-phosphate uridylyltransferase (295 aa).

It belongs to the UDPGP type 2 family.

The catalysed reaction is alpha-D-glucose 1-phosphate + UTP + H(+) = UDP-alpha-D-glucose + diphosphate. May play a role in stationary phase survival. This Haemophilus influenzae (strain ATCC 51907 / DSM 11121 / KW20 / Rd) protein is UTP--glucose-1-phosphate uridylyltransferase (galU).